The sequence spans 361 residues: Inactive 2'-5'-oligoadenylate synthase 1D (361 aa).

The protein belongs to the 2-5A synthase family. As to quaternary structure, interacts with OAS1A, the interaction inhibits OAS1A catalytic activity. As to expression, expressed specifically in oocytes (at protein level). Expressed at highest level in ovary with lesser amounts in intestine, brain, thymus lung, kidney, liver and uterus.

The protein localises to the cytoplasm. Functionally, does not have 2'-5'-oligoadenylate synthetase activity, but can bind double-stranded RNA. May play a role in the control of female fertility, possibly by binding to and inhibiting OAS1A. The protein is Inactive 2'-5'-oligoadenylate synthase 1D of Mus musculus (Mouse).